The sequence spans 206 residues: Probable GTP-binding protein EngB (206 aa).

One can recognise an EngB-type G domain in the interval 29–201; the sequence is ILPEVAVVGR…MIMIQDALND (173 aa). Residues 37 to 44, 64 to 68, 82 to 85, 149 to 152, and 180 to 182 each bind GTP; these read GRSNVGKS, GKTQA, DLPG, TKID, and YSV. Residues S44 and T66 each contribute to the Mg(2+) site.

This sequence belongs to the TRAFAC class TrmE-Era-EngA-EngB-Septin-like GTPase superfamily. EngB GTPase family. It depends on Mg(2+) as a cofactor.

In terms of biological role, necessary for normal cell division and for the maintenance of normal septation. In Protochlamydia amoebophila (strain UWE25), this protein is Probable GTP-binding protein EngB.